The sequence spans 273 residues: 2,3,4,5-tetrahydropyridine-2,6-dicarboxylate N-succinyltransferase (273 aa).

Residues arginine 104 and aspartate 141 each coordinate substrate.

The protein belongs to the transferase hexapeptide repeat family. As to quaternary structure, homotrimer.

It is found in the cytoplasm. The catalysed reaction is (S)-2,3,4,5-tetrahydrodipicolinate + succinyl-CoA + H2O = (S)-2-succinylamino-6-oxoheptanedioate + CoA. The protein operates within amino-acid biosynthesis; L-lysine biosynthesis via DAP pathway; LL-2,6-diaminopimelate from (S)-tetrahydrodipicolinate (succinylase route): step 1/3. The sequence is that of 2,3,4,5-tetrahydropyridine-2,6-dicarboxylate N-succinyltransferase from Nitrosomonas europaea (strain ATCC 19718 / CIP 103999 / KCTC 2705 / NBRC 14298).